The primary structure comprises 136 residues: Evasin P991 (136 aa).

The N-terminal stretch at 1–28 (MHSTIVYACLLALAVFVALHGTPLAALA) is a signal peptide. Asn-41, Asn-61, Asn-64, Asn-78, Asn-92, Asn-100, and Asn-122 each carry an N-linked (GlcNAc...) asparagine glycan. Intrachain disulfides connect Cys-55–Cys-77, Cys-73–Cys-114, Cys-90–Cys-119, and Cys-109–Cys-128.

It localises to the secreted. Salivary chemokine-binding protein which has chemokine-neutralizing activity and binds to host chemokines CCL2, CCL3, CCL3L1, CCL4, CCL4L1, CCL5, CCL6, CCL7, CCL8, CCL9, CCL11, CCL12, CCL13, CCL14, CCL16, CCL17, CCL18, CCL19, CCL22, CCL23, CCL24 and CCL27. This chain is Evasin P991, found in Amblyomma cajennense (Cayenne tick).